The primary structure comprises 576 residues: Formate--tetrahydrofolate ligase 1 (576 aa).

69 to 76 contacts ATP; sequence TPLGEGKT.

It belongs to the formate--tetrahydrofolate ligase family.

It catalyses the reaction (6S)-5,6,7,8-tetrahydrofolate + formate + ATP = (6R)-10-formyltetrahydrofolate + ADP + phosphate. The protein operates within one-carbon metabolism; tetrahydrofolate interconversion. The sequence is that of Formate--tetrahydrofolate ligase 1 from Rubrobacter xylanophilus (strain DSM 9941 / JCM 11954 / NBRC 16129 / PRD-1).